The chain runs to 715 residues: Fatty acid oxidation complex subunit alpha (715 aa).

An enoyl-CoA hydratase region spans residues 1-190 (MDMTSAFTLN…RVGLVDEVVP (190 aa)). The tract at residues 306-715 (GPLASVGVLG…WNSGETDLKE (410 aa)) is 3-hydroxyacyl-CoA dehydrogenase.

It in the N-terminal section; belongs to the enoyl-CoA hydratase/isomerase family. The protein in the central section; belongs to the 3-hydroxyacyl-CoA dehydrogenase family. Heterotetramer of two alpha chains (FadJ) and two beta chains (FadI).

The protein resides in the cytoplasm. It catalyses the reaction a (3S)-3-hydroxyacyl-CoA = a (2E)-enoyl-CoA + H2O. The catalysed reaction is a 4-saturated-(3S)-3-hydroxyacyl-CoA = a (3E)-enoyl-CoA + H2O. The enzyme catalyses a (3S)-3-hydroxyacyl-CoA + NAD(+) = a 3-oxoacyl-CoA + NADH + H(+). It carries out the reaction (3S)-3-hydroxybutanoyl-CoA = (3R)-3-hydroxybutanoyl-CoA. It functions in the pathway lipid metabolism; fatty acid beta-oxidation. In terms of biological role, catalyzes the formation of a hydroxyacyl-CoA by addition of water on enoyl-CoA. Also exhibits 3-hydroxyacyl-CoA epimerase and 3-hydroxyacyl-CoA dehydrogenase activities. In Citrobacter koseri (strain ATCC BAA-895 / CDC 4225-83 / SGSC4696), this protein is Fatty acid oxidation complex subunit alpha.